We begin with the raw amino-acid sequence, 157 residues long: 2-C-methyl-D-erythritol 2,4-cyclodiphosphate synthase (157 aa).

2 residues coordinate a divalent metal cation: D8 and H10. 4-CDP-2-C-methyl-D-erythritol 2-phosphate-binding positions include 8–10 (DVH) and 34–35 (HS). Residue H42 participates in a divalent metal cation binding. 4-CDP-2-C-methyl-D-erythritol 2-phosphate-binding positions include 56-58 (DIG), 61-65 (FPDTD), 100-106 (AQAPKML), 132-135 (TTTE), F139, and R142.

It belongs to the IspF family. As to quaternary structure, homotrimer. A divalent metal cation is required as a cofactor.

It catalyses the reaction 4-CDP-2-C-methyl-D-erythritol 2-phosphate = 2-C-methyl-D-erythritol 2,4-cyclic diphosphate + CMP. Its pathway is isoprenoid biosynthesis; isopentenyl diphosphate biosynthesis via DXP pathway; isopentenyl diphosphate from 1-deoxy-D-xylulose 5-phosphate: step 4/6. Involved in the biosynthesis of isopentenyl diphosphate (IPP) and dimethylallyl diphosphate (DMAPP), two major building blocks of isoprenoid compounds. Catalyzes the conversion of 4-diphosphocytidyl-2-C-methyl-D-erythritol 2-phosphate (CDP-ME2P) to 2-C-methyl-D-erythritol 2,4-cyclodiphosphate (ME-CPP) with a corresponding release of cytidine 5-monophosphate (CMP). This is 2-C-methyl-D-erythritol 2,4-cyclodiphosphate synthase from Photorhabdus laumondii subsp. laumondii (strain DSM 15139 / CIP 105565 / TT01) (Photorhabdus luminescens subsp. laumondii).